A 178-amino-acid chain; its full sequence is Interleukin-1 receptor antagonist protein (178 aa).

The signal sequence occupies residues 1–26 (MEICRGPYSHLISLLLILLFRSESAG). Cysteines 92 and 142 form a disulfide. Asn110 carries an N-linked (GlcNAc...) asparagine glycan.

It belongs to the IL-1 family.

It is found in the secreted. In terms of biological role, anti-inflammatory antagonist of interleukin-1 family of proinflammatory cytokines such as interleukin-1beta/IL1B and interleukin-1alpha/IL1A. Protects from immune dysregulation and uncontrolled systemic inflammation triggered by IL1 for a range of innate stimulatory agents such as pathogens. The polypeptide is Interleukin-1 receptor antagonist protein (Il1rn) (Rattus norvegicus (Rat)).